A 181-amino-acid chain; its full sequence is Probable nicotinate-nucleotide adenylyltransferase (181 aa).

The protein belongs to the NadD family.

The catalysed reaction is nicotinate beta-D-ribonucleotide + ATP + H(+) = deamido-NAD(+) + diphosphate. It participates in cofactor biosynthesis; NAD(+) biosynthesis; deamido-NAD(+) from nicotinate D-ribonucleotide: step 1/1. Functionally, catalyzes the reversible adenylation of nicotinate mononucleotide (NaMN) to nicotinic acid adenine dinucleotide (NaAD). The sequence is that of Probable nicotinate-nucleotide adenylyltransferase from Campylobacter jejuni subsp. jejuni serotype O:23/36 (strain 81-176).